Consider the following 407-residue polypeptide: Venom metalloproteinase 3 (407 aa).

4 N-linked (GlcNAc...) asparagine glycosylation sites follow: N42, N91, N126, and N166. Residues 191–405 form the Peptidase M12B domain; the sequence is FYPKLLVLVD…TSAACLKDTY (215 aa). 2 disulfide bridges follow: C317–C400 and C356–C384. A Zn(2+)-binding site is contributed by H340. E341 is a catalytic residue. H344 and H350 together coordinate Zn(2+). N-linked (GlcNAc...) asparagine glycosylation is present at N391.

In the C-terminal section; belongs to the venom metalloproteinase (M12B) family. In terms of assembly, monomer. Zn(2+) serves as cofactor. In terms of tissue distribution, expressed by the venom gland.

The protein localises to the secreted. With respect to regulation, the gelatinase activity is inhibited by EDTA. Functionally, the recombinant protein has gelatinase activity. In vivo, injection of this recombinant into fifth instar L.oleracea (host) larvae results in partial insect mortality associated with the molt to sixth instar, with surviving insects showing retarded development and growth. The polypeptide is Venom metalloproteinase 3 (Eulophus pennicornis (Parasitoid wasp)).